The chain runs to 143 residues: MPEPARPATASVPVEGTLLAFDYGEKRIGVALGNTVSRSARALETIPNRSVDFRFAQISRLVGEWQPVGFVVGMPVHPDGEEQPMIKLAKRFGNQLLGRYGLPVTWVDERYSSIAAQDAGASDDVLDAEAARIILQQFFDEHA.

It belongs to the YqgF nuclease family.

It is found in the cytoplasm. Could be a nuclease involved in processing of the 5'-end of pre-16S rRNA. The polypeptide is Putative pre-16S rRNA nuclease (Ralstonia pickettii (strain 12J)).